Consider the following 246-residue polypeptide: Probable transcriptional regulatory protein GWCH70_2524 (246 aa).

Belongs to the TACO1 family.

The protein resides in the cytoplasm. The polypeptide is Probable transcriptional regulatory protein GWCH70_2524 (Geobacillus sp. (strain WCH70)).